We begin with the raw amino-acid sequence, 570 residues long: Urease subunit alpha (570 aa).

The 440-residue stretch at 131–570 (GGFDSHIHFI…LPMAQRYFLF (440 aa)) folds into the Urease domain. The Ni(2+) site is built by His-136, His-138, and Lys-219. Lys-219 carries the post-translational modification N6-carboxylysine. His-221 provides a ligand contact to substrate. The Ni(2+) site is built by His-248 and His-274. The active-site Proton donor is the His-322. Asp-362 is a Ni(2+) binding site.

This sequence belongs to the metallo-dependent hydrolases superfamily. Urease alpha subunit family. Heterotrimer of UreA (gamma), UreB (beta) and UreC (alpha) subunits. Three heterotrimers associate to form the active enzyme. The cofactor is Ni cation. Post-translationally, carboxylation allows a single lysine to coordinate two nickel ions.

It is found in the cytoplasm. The enzyme catalyses urea + 2 H2O + H(+) = hydrogencarbonate + 2 NH4(+). It functions in the pathway nitrogen metabolism; urea degradation; CO(2) and NH(3) from urea (urease route): step 1/1. The chain is Urease subunit alpha from Beijerinckia indica subsp. indica (strain ATCC 9039 / DSM 1715 / NCIMB 8712).